The sequence spans 317 residues: 4-diphosphocytidyl-2-C-methyl-D-erythritol kinase (317 aa).

Lys-11 is a catalytic residue. Residue 99-109 (PVAAGLAGGST) coordinates ATP. Residue Asp-141 is part of the active site.

The protein belongs to the GHMP kinase family. IspE subfamily.

The enzyme catalyses 4-CDP-2-C-methyl-D-erythritol + ATP = 4-CDP-2-C-methyl-D-erythritol 2-phosphate + ADP + H(+). It functions in the pathway isoprenoid biosynthesis; isopentenyl diphosphate biosynthesis via DXP pathway; isopentenyl diphosphate from 1-deoxy-D-xylulose 5-phosphate: step 3/6. Catalyzes the phosphorylation of the position 2 hydroxy group of 4-diphosphocytidyl-2C-methyl-D-erythritol. This is 4-diphosphocytidyl-2-C-methyl-D-erythritol kinase from Nostoc punctiforme (strain ATCC 29133 / PCC 73102).